The following is a 427-amino-acid chain: Serine--tRNA ligase (427 aa).

231 to 233 (TAE) is an L-serine binding site. 262 to 264 (RSE) is a binding site for ATP. Glutamate 285 contributes to the L-serine binding site. Residue 349–352 (EISS) coordinates ATP. Serine 385 provides a ligand contact to L-serine.

This sequence belongs to the class-II aminoacyl-tRNA synthetase family. Type-1 seryl-tRNA synthetase subfamily. Homodimer. The tRNA molecule binds across the dimer.

The protein resides in the cytoplasm. It catalyses the reaction tRNA(Ser) + L-serine + ATP = L-seryl-tRNA(Ser) + AMP + diphosphate + H(+). The enzyme catalyses tRNA(Sec) + L-serine + ATP = L-seryl-tRNA(Sec) + AMP + diphosphate + H(+). It functions in the pathway aminoacyl-tRNA biosynthesis; selenocysteinyl-tRNA(Sec) biosynthesis; L-seryl-tRNA(Sec) from L-serine and tRNA(Sec): step 1/1. Catalyzes the attachment of serine to tRNA(Ser). Is also able to aminoacylate tRNA(Sec) with serine, to form the misacylated tRNA L-seryl-tRNA(Sec), which will be further converted into selenocysteinyl-tRNA(Sec). The polypeptide is Serine--tRNA ligase (Brucella melitensis biotype 2 (strain ATCC 23457)).